A 273-amino-acid chain; its full sequence is Formamidopyrimidine-DNA glycosylase (273 aa).

Residue P2 is the Schiff-base intermediate with DNA of the active site. Catalysis depends on E3, which acts as the Proton donor. K58 (proton donor; for beta-elimination activity) is an active-site residue. DNA contacts are provided by H92, R111, and K153. Residues 238-272 form an FPG-type zinc finger; sequence KVYGREGQSCLSCSSTIIKIKHSGRSTFYCKTCQY. The Proton donor; for delta-elimination activity role is filled by R262.

Belongs to the FPG family. Monomer. The cofactor is Zn(2+).

The enzyme catalyses Hydrolysis of DNA containing ring-opened 7-methylguanine residues, releasing 2,6-diamino-4-hydroxy-5-(N-methyl)formamidopyrimidine.. It catalyses the reaction 2'-deoxyribonucleotide-(2'-deoxyribose 5'-phosphate)-2'-deoxyribonucleotide-DNA = a 3'-end 2'-deoxyribonucleotide-(2,3-dehydro-2,3-deoxyribose 5'-phosphate)-DNA + a 5'-end 5'-phospho-2'-deoxyribonucleoside-DNA + H(+). Involved in base excision repair of DNA damaged by oxidation or by mutagenic agents. Acts as a DNA glycosylase that recognizes and removes damaged bases. Has a preference for oxidized purines, such as 7,8-dihydro-8-oxoguanine (8-oxoG). Has AP (apurinic/apyrimidinic) lyase activity and introduces nicks in the DNA strand. Cleaves the DNA backbone by beta-delta elimination to generate a single-strand break at the site of the removed base with both 3'- and 5'-phosphates. This chain is Formamidopyrimidine-DNA glycosylase, found in Rickettsia africae (strain ESF-5).